We begin with the raw amino-acid sequence, 286 residues long: Putative S-adenosyl-L-methionine-dependent methyltransferase FRAAL3718 (286 aa).

Residues Asp122 and 151–152 (DL) contribute to the S-adenosyl-L-methionine site.

This sequence belongs to the UPF0677 family.

In terms of biological role, exhibits S-adenosyl-L-methionine-dependent methyltransferase activity. This Frankia alni (strain DSM 45986 / CECT 9034 / ACN14a) protein is Putative S-adenosyl-L-methionine-dependent methyltransferase FRAAL3718.